The chain runs to 436 residues: GTPase Der (436 aa).

2 EngA-type G domains span residues 4 to 167 (PVIA…PKIE) and 176 to 351 (IRFS…ESHS). GTP contacts are provided by residues 10–17 (GRPNVGKS), 57–61 (DTGGI), 119–122 (NKVD), 182–189 (GRPNVGKS), 229–233 (DTAGM), and 294–297 (NKWD). One can recognise a KH-like domain in the interval 352 to 436 (IRIQTNVLND…PIHIIARARD (85 aa)).

Belongs to the TRAFAC class TrmE-Era-EngA-EngB-Septin-like GTPase superfamily. EngA (Der) GTPase family. Associates with the 50S ribosomal subunit.

Functionally, GTPase that plays an essential role in the late steps of ribosome biogenesis. The polypeptide is GTPase Der (Bacillus cereus (strain ATCC 10987 / NRS 248)).